The following is a 111-amino-acid chain: WAP four-disulfide core domain protein 12 (111 aa).

Residues 1-23 form the signal peptide; the sequence is MGSSSFLVLMVSLVLVTLVAVEG. The region spanning 27 to 74 is the WAP domain; it reads GIEKAGVCPADNVRCFKSDPPQCHTDQDCLGERKCCYLHCGFKCVIPV. 4 disulfides stabilise this stretch: cysteine 34-cysteine 62, cysteine 41-cysteine 66, cysteine 49-cysteine 61, and cysteine 55-cysteine 70. A disordered region spans residues 80-111; that stretch reads GGNKDEDVSRPYPEPGWEAKCPGSSSTRCPQK. Positions 102-111 are enriched in polar residues; the sequence is GSSSTRCPQK.

Highly expressed in prostate, skin, lung and esophagus. Weakly expressed in skeletal muscle, epididymis, kidney, trachea, salivary gland, testis and seminal vesicle.

It is found in the secreted. Its function is as follows. Antibacterial protein. Putative acid-stable proteinase inhibitor. The chain is WAP four-disulfide core domain protein 12 (WFDC12) from Homo sapiens (Human).